An 894-amino-acid polypeptide reads, in one-letter code: MAKSNEEPNSNLNTNKPPLKRTKTLAQQPSLNLRVSIAAADNGIGNSSSSSTKTDFEQQQRNYPSFLGIGSTSRKRRPPPPPKPSNITPNVKPPASDFQTKPHSEPKTSPSSSSPPSLPIAITKQQQQQHSISSPIFYLFVITCVIFVPYSAFLQYKLAKLKDMKLQLCCQIDFCSGNGKTSLQKDVVDDGSFSYYILNADSRTISLYIVLFTLVLPFILYKYIDYLPQMINFSRRTNSNKEDVPLKKRVAYMVDVFFSIYPYAKLLALLFATLFLIAFGGLALYAVTGGSMAEALWHSWTYVADAGNHAETEGMGQRIVSVSISAGGMLIFAMMLGLVSDAISEKVDSLRKGKSEVIERNHVLILGWSDKLGSLLKQLAIANKSVGGGVIVVLAEKEKEEMEMDIAKLEFDFMGTSVICRSGSPLILADLKKVSVSKARAIIVLASDENADQSDARALRVVLSLTGVKEALRGHVVVEMSDLDNEPLVKLVGGELIETVVAHDVIGRLMIQCALQPGLAQIWEDILGFENAEFYIKRWPELDGLLFKDILISFPDAIPCGVKVSADGGKIVINPDDNYVLRDGDEVLVIAEDDDTYAPGPLPEVRKGYFPRIRDPPKYPEKILFCGWRRDIDDMIMVLEAFLAPGSELWMFNEVPEKQRERKLAAGELDVFGLENIKLVHREGNAVIRRHLESLPLETFDSILILADESVEDSVAHSDSRSLATLLLIRDIQSRRLPYRDTKSTSLRLSGFSHNSWIREMQQASDKSIIISEILDSRTRNLVSVSRISDYVLSNELVSMALAMVAEDKQINRVLEELFAEEGNEMCIKPAEFYLFDQEELCFYDIMIRGRTRKEIVIGYRLASQERALINPSEKSMTRKWSLDDVFVVIASGE.

The segment at 1 to 124 (MAKSNEEPNS…PPSLPIAITK (124 aa)) is disordered. 3 stretches are compositionally biased toward polar residues: residues 7–16 (EPNSNLNTNK), 24–33 (TLAQQPSLNL), and 44–63 (IGNS…QRNY). A run of 4 helical transmembrane segments spans residues 134-154 (SPIF…SAFL), 204-224 (TISL…YKYI), 267-287 (LALL…LYAV), and 319-339 (IVSV…LGLV). RCK N-terminal domains lie at 360 to 501 (RNHV…ETVV) and 620 to 769 (PEKI…DKSI). Residues 390 to 415 (VIVVLAEKEKEEMEMDIAKLEFDFMG) are a coiled coil.

It belongs to the castor/pollux (TC 1.A.1.23) family. As to quaternary structure, homotetramer.

It localises to the nucleus membrane. Functionally, required for both rhizobial and mycorrhizal symbiosis. Involved in Nod-factor-induced calcium spiking. May induce a change in membrane polarization that activates the opening of a calcium channel required for calcium spiking. Might be calcium gated. The chain is Probable ion channel SYM8 (SYM8) from Pisum sativum (Garden pea).